We begin with the raw amino-acid sequence, 229 residues long: Transmembrane protein 182 (229 aa).

An N-terminal signal peptide occupies residues 1-26 (MRLNVAVFFGALFGALGVLLFLVAFG). The Extracellular portion of the chain corresponds to 27–114 (SDYWLLATEV…SYDSAIIYRG (88 aa)). N-linked (GlcNAc...) asparagine glycosylation occurs at Asn47. Residues 49–59 (TFHHEGFFWRC) form an interaction with ITGB1 region. N-linked (GlcNAc...) asparagine glycosylation is found at Asn68, Asn85, and Asn102. The chain crosses the membrane as a helical span at residues 115–135 (FWAVLLLLGVVAALTASFLII). At 136–153 (CAAPFSSHFLYKAGGGSY) the chain is on the cytoplasmic side. The helical transmembrane segment at 154-174 (IASGVLFSLVVILYVIWVQAV) threads the bilayer. Over 175 to 200 (ADMESYRALRMRDCWEFTPSILYGWS) the chain is Extracellular. The helical transmembrane segment at 201–221 (FFLAPAGVFFSLLAGLLFLVV) threads the bilayer. Residues 222–229 (GRHIQIHH) lie on the Cytoplasmic side of the membrane.

This sequence belongs to the TMEM182 family. In terms of assembly, interacts with ITGB1. As to expression, highly expressed in white adipose tissues (WAT), with 10-fold to 20-fold higher levels than in brown adipose tissue (BAT). Also expressed in skeletal muscle, heart and lung. Lower relative levels of expression in kidney, spleen, testis, brain and liver.

It localises to the cell membrane. Its function is as follows. Negatively regulates myogenesis and skeletal muscle regeneration via its association with ITGB1. Modulates ITGB1 activation by decreasing ITGB1-LAMB1 interaction and inhibiting ITGB1-mediated intracellular signaling during myogenesis. The chain is Transmembrane protein 182 (Tmem182) from Mus musculus (Mouse).